Consider the following 288-residue polypeptide: DNA repair protein RecO (288 aa).

Belongs to the RecO family.

Functionally, involved in DNA repair and RecF pathway recombination. The protein is DNA repair protein RecO of Trichodesmium erythraeum (strain IMS101).